A 301-amino-acid polypeptide reads, in one-letter code: Acetyl-coenzyme A carboxylase carboxyl transferase subunit beta (301 aa).

The 270-residue stretch at 23-292 (VWTKCDSCGQ…PSPDEPRESV (270 aa)) folds into the CoA carboxyltransferase N-terminal domain. Zn(2+) contacts are provided by Cys-27, Cys-30, Cys-46, and Cys-49. A C4-type zinc finger spans residues 27–49 (CDSCGQVLYRAELERNLEVCPKC). The segment at 280 to 301 (LPAPSPDEPRESVVVPDQEPEA) is disordered.

Belongs to the AccD/PCCB family. Acetyl-CoA carboxylase is a heterohexamer composed of biotin carboxyl carrier protein (AccB), biotin carboxylase (AccC) and two subunits each of ACCase subunit alpha (AccA) and ACCase subunit beta (AccD). Zn(2+) serves as cofactor.

The protein resides in the cytoplasm. It catalyses the reaction N(6)-carboxybiotinyl-L-lysyl-[protein] + acetyl-CoA = N(6)-biotinyl-L-lysyl-[protein] + malonyl-CoA. The protein operates within lipid metabolism; malonyl-CoA biosynthesis; malonyl-CoA from acetyl-CoA: step 1/1. Functionally, component of the acetyl coenzyme A carboxylase (ACC) complex. Biotin carboxylase (BC) catalyzes the carboxylation of biotin on its carrier protein (BCCP) and then the CO(2) group is transferred by the transcarboxylase to acetyl-CoA to form malonyl-CoA. This Enterobacter sp. (strain 638) protein is Acetyl-coenzyme A carboxylase carboxyl transferase subunit beta.